The following is a 371-amino-acid chain: 2-aminoethylphosphonate--pyruvate transaminase (371 aa).

At lysine 195 the chain carries N6-(pyridoxal phosphate)lysine.

This sequence belongs to the class-V pyridoxal-phosphate-dependent aminotransferase family. PhnW subfamily. Homotetramer; however this is for an enzyme with a molecular weight of 16500, which is in disagreement with the weight of this protein. It depends on pyridoxal 5'-phosphate as a cofactor.

The enzyme catalyses (2-aminoethyl)phosphonate + pyruvate = phosphonoacetaldehyde + L-alanine. Inhibited by phosphonic acids and very slightly inhibited by aminophosphonic acids. In terms of biological role, involved in phosphonate degradation. This chain is 2-aminoethylphosphonate--pyruvate transaminase (phnW), found in Pseudomonas aeruginosa (strain ATCC 15692 / DSM 22644 / CIP 104116 / JCM 14847 / LMG 12228 / 1C / PRS 101 / PAO1).